A 141-amino-acid chain; its full sequence is ATP synthase epsilon chain (141 aa).

It belongs to the ATPase epsilon chain family. In terms of assembly, F-type ATPases have 2 components, CF(1) - the catalytic core - and CF(0) - the membrane proton channel. CF(1) has five subunits: alpha(3), beta(3), gamma(1), delta(1), epsilon(1). CF(0) has three main subunits: a, b and c.

The protein resides in the cell membrane. Its function is as follows. Produces ATP from ADP in the presence of a proton gradient across the membrane. The sequence is that of ATP synthase epsilon chain from Lactococcus lactis subsp. cremoris (strain MG1363).